The following is a 247-amino-acid chain: V-type proton ATPase subunit D (247 aa).

The protein belongs to the V-ATPase D subunit family. As to quaternary structure, V-ATPase is a heteromultimeric enzyme made up of two complexes: the ATP-hydrolytic V1 complex and the proton translocation V0 complex. The V1 complex consists of three catalytic AB heterodimers that form a heterohexamer, three peripheral stalks each consisting of EG heterodimers, one central rotor including subunits D and F, and the regulatory subunits C and H. The proton translocation complex V0 consists of the proton transport subunit a, a ring of proteolipid subunits c9c'', rotary subunit d, subunits e and f, and the accessory subunits ATP6AP1/Ac45 and ATP6AP2/PRR. Interacts with SNX10. Expressed in brain (at protein level). Present in tissues active in secretion. Amounts elevated in brain, kidney and testis.

It is found in the membrane. It localises to the cytoplasmic vesicle. The protein resides in the clathrin-coated vesicle membrane. The protein localises to the cytoplasm. Its subcellular location is the cytoskeleton. It is found in the microtubule organizing center. It localises to the centrosome. The protein resides in the cell projection. The protein localises to the cilium. Its function is as follows. Subunit of the V1 complex of vacuolar(H+)-ATPase (V-ATPase), a multisubunit enzyme composed of a peripheral complex (V1) that hydrolyzes ATP and a membrane integral complex (V0) that translocates protons. V-ATPase is responsible for acidifying and maintaining the pH of intracellular compartments and in some cell types, is targeted to the plasma membrane, where it is responsible for acidifying the extracellular environment. May play a role in cilium biogenesis through regulation of the transport and the localization of proteins to the cilium. The protein is V-type proton ATPase subunit D (ATP6V1D) of Bos taurus (Bovine).